The sequence spans 100 residues: Nucleoid-associated protein HPSH_00175 (100 aa).

The protein belongs to the YbaB/EbfC family. In terms of assembly, homodimer.

It localises to the cytoplasm. It is found in the nucleoid. In terms of biological role, binds to DNA and alters its conformation. May be involved in regulation of gene expression, nucleoid organization and DNA protection. The sequence is that of Nucleoid-associated protein HPSH_00175 from Helicobacter pylori (strain Shi470).